Reading from the N-terminus, the 64-residue chain is Orcokinin peptides (64 aa).

Propeptides lie at residues 1–6 (MNIRPG) and 23–24 (NI).

Belongs to the orcokinin family. Orcokinin-3 is expressed throughout the central nervous system (at protein level).

Its subcellular location is the secreted. Functionally, myotropic peptides. In Camponotus floridanus (Florida carpenter ant), this protein is Orcokinin peptides.